We begin with the raw amino-acid sequence, 100 residues long: Urease subunit gamma (100 aa).

It belongs to the urease gamma subunit family. In terms of assembly, heterotrimer of UreA (gamma), UreB (beta) and UreC (alpha) subunits. Three heterotrimers associate to form the active enzyme.

Its subcellular location is the cytoplasm. It carries out the reaction urea + 2 H2O + H(+) = hydrogencarbonate + 2 NH4(+). It functions in the pathway nitrogen metabolism; urea degradation; CO(2) and NH(3) from urea (urease route): step 1/1. This Paraburkholderia phytofirmans (strain DSM 17436 / LMG 22146 / PsJN) (Burkholderia phytofirmans) protein is Urease subunit gamma.